Here is a 153-residue protein sequence, read N- to C-terminus: Endoribonuclease YbeY (153 aa).

Zn(2+)-binding residues include histidine 118, histidine 122, and histidine 128.

Belongs to the endoribonuclease YbeY family. It depends on Zn(2+) as a cofactor.

The protein resides in the cytoplasm. Its function is as follows. Single strand-specific metallo-endoribonuclease involved in late-stage 70S ribosome quality control and in maturation of the 3' terminus of the 16S rRNA. In Staphylococcus saprophyticus subsp. saprophyticus (strain ATCC 15305 / DSM 20229 / NCIMB 8711 / NCTC 7292 / S-41), this protein is Endoribonuclease YbeY.